Reading from the N-terminus, the 278-residue chain is MNDIDNLAEIKKKLWNGSINVKILLNIEDQIIEYLLTIPRNSYFPTVFPQLIRYFQNFITTIELSKVPIWLEFEEVPLKWNLPVGVLYDYLYLPALLNDHDLGCWTISMKYEPVYPIEYIIPFNEKLAGDGQIDYMKTMNRILMNQLKQSCFVLNGTAKPIMQLSEANTNQLWKSLISRNLGDFNVLNKKIIKTIDRIPVKIYIAGSPIVVQAPISKDQTLQEILSLHTPNLSSSSSSMSHPYIQGIDVTSLMNQSIREIWQLFKHLDNFLYITLIIL.

Residue lysine 148 forms a Glycyl lysine isopeptide (Lys-Gly) (interchain with G-Cter in ATG12) linkage.

The protein belongs to the ATG5 family. In terms of assembly, conjugated with ATG12. Post-translationally, conjugated to ATG12; which is essential for autophagy.

It localises to the preautophagosomal structure membrane. Involved in cytoplasm to vacuole transport (Cvt) and autophagic vesicle formation. Autophagy is essential for maintenance of amino acid levels and protein synthesis under nitrogen starvation. Required for selective autophagic degradation of the nucleus (nucleophagy). Also required for mitophagy, which eliminates defective or superfluous mitochondria in order to fulfill cellular energy requirements and prevent excess ROS production. Conjugation with ATG12, through a ubiquitin-like conjugating system involving ATG7 as an E1-like activating enzyme and ATG10 as an E2-like conjugating enzyme, is essential for its function. The ATG12-ATG5 conjugate acts as an E3-like enzyme which is required for lipidation of ATG8 and ATG8 association to the vesicle membranes. The sequence is that of Autophagy protein 5 (ATG5) from Candida albicans (strain SC5314 / ATCC MYA-2876) (Yeast).